We begin with the raw amino-acid sequence, 444 residues long: Proline--tRNA ligase (444 aa).

The protein belongs to the class-II aminoacyl-tRNA synthetase family. ProS type 2 subfamily. As to quaternary structure, homodimer.

It localises to the cytoplasm. It carries out the reaction tRNA(Pro) + L-proline + ATP = L-prolyl-tRNA(Pro) + AMP + diphosphate. Its function is as follows. Catalyzes the attachment of proline to tRNA(Pro) in a two-step reaction: proline is first activated by ATP to form Pro-AMP and then transferred to the acceptor end of tRNA(Pro). This is Proline--tRNA ligase from Maricaulis maris (strain MCS10) (Caulobacter maris).